Consider the following 249-residue polypeptide: Vesicle-associated membrane protein-associated protein A (249 aa).

Ala2 carries the N-acetylalanine modification. At 2–227 (ASASGAMAKH…VSFRDNVTSP (226 aa)) the chain is on the cytoplasmic side. An MSP domain is found at 14-131 (ILVLDPPSDL…MDSKLRCVFE (118 aa)). Residues 50-53 (KVKT) are phosphorylated FFAT motif binding. An N6-acetyllysine modification is found at Lys125. The segment covering 135–144 (ENDKLNDMEP) has biased composition (basic and acidic residues). Residues 135-166 (ENDKLNDMEPSKAVPLNASKQDGPLPKPHSVS) form a disordered region. The residue at position 166 (Ser166) is a Phosphoserine. Residues 168 to 207 (NDTETRKLMEECKRLQGEMMKLSEENRHLRDEGLRLRKVA) adopt a coiled-coil conformation. Phosphothreonine is present on Thr170. 3 positions are modified to phosphoserine: Ser214, Ser216, and Ser219. Residues 228–248 (LPSLLVVIAAIFIGFFLGKFI) form a helical; Anchor for type IV membrane protein membrane-spanning segment.

It belongs to the VAMP-associated protein (VAP) (TC 9.B.17) family. Homodimer; disulfide-linked. Heterodimer with VAPB. Interacts with VAMP1, VAMP2, STX1A, BET1, SEC22C and with the C-terminal domain of OCLN. Interacts (via MSP domain) with OSBPL1A (via FFAT motif). Interacts (via MSP domain) with ZFYVE27; may retain ZFYVE27 in the endoplasmic reticulum and regulate its function in cell projections formation. Interacts with OSBP. Interacts (via C-terminus) with RSAD2/viperin (via C-terminus). Interacts with IFITM3. Interacts with OSBPL3 (phosphorylated form). Interacts with KIF5A in a ZFYVE27-dependent manner. Interacts (via MSP domain) with STARD3 (via phosphorylated FFAT motif); this interaction recruits VAPA to the endosome. Interacts with STARD3NL (via FFAT motif). Interacts with CERT1. Interacts with PLEKHA3 and SACM1L to form a ternary complex. Interacts with VPS13A (via FFAT motif). Interacts with RB1CC1 (via phosphorylated FFAT motif), MIGA2 (via phosphorylated FFAT motif), RMDN3 (via phosphorylated FFAT motif), KCNB1 (via phosphorylated FFAT motif) and KCNB2 (via phosphorylated FFAT motif). Interacts (via MSP domain) with WDR44; the interactions connect the endoplasmic reticulum (ER) with the endosomal tubule. In terms of tissue distribution, ubiquitous.

It is found in the endoplasmic reticulum membrane. Its subcellular location is the cell membrane. It localises to the cell junction. The protein localises to the tight junction. The protein resides in the nucleus membrane. Its function is as follows. Endoplasmic reticulum (ER)-anchored protein that mediates the formation of contact sites between the ER and endosomes via interaction with FFAT motif-containing proteins such as STARD3 or WDR44. STARD3-VAPA interaction enables cholesterol transfer from the ER to endosomes. Via interaction with WDR44 participates in neosynthesized protein export. In addition, recruited to the plasma membrane through OSBPL3 binding. The OSBPL3-VAPA complex stimulates RRAS signaling which in turn attenuates integrin beta-1 (ITGB1) activation at the cell surface. With OSBPL3, may regulate ER morphology. May play a role in vesicle trafficking. This chain is Vesicle-associated membrane protein-associated protein A, found in Rattus norvegicus (Rat).